The following is a 481-amino-acid chain: Protein nucleotidyltransferase YdiU (481 aa).

8 residues coordinate ATP: G85, G87, R88, K108, D120, G121, R172, and R179. The Proton acceptor role is filled by D248. Mg(2+)-binding residues include N249 and D258. D258 provides a ligand contact to ATP.

The protein belongs to the SELO family. Mg(2+) is required as a cofactor. It depends on Mn(2+) as a cofactor.

The catalysed reaction is L-seryl-[protein] + ATP = 3-O-(5'-adenylyl)-L-seryl-[protein] + diphosphate. It carries out the reaction L-threonyl-[protein] + ATP = 3-O-(5'-adenylyl)-L-threonyl-[protein] + diphosphate. The enzyme catalyses L-tyrosyl-[protein] + ATP = O-(5'-adenylyl)-L-tyrosyl-[protein] + diphosphate. It catalyses the reaction L-histidyl-[protein] + UTP = N(tele)-(5'-uridylyl)-L-histidyl-[protein] + diphosphate. The catalysed reaction is L-seryl-[protein] + UTP = O-(5'-uridylyl)-L-seryl-[protein] + diphosphate. It carries out the reaction L-tyrosyl-[protein] + UTP = O-(5'-uridylyl)-L-tyrosyl-[protein] + diphosphate. Its function is as follows. Nucleotidyltransferase involved in the post-translational modification of proteins. It can catalyze the addition of adenosine monophosphate (AMP) or uridine monophosphate (UMP) to a protein, resulting in modifications known as AMPylation and UMPylation. In Cereibacter sphaeroides (strain ATCC 17025 / ATH 2.4.3) (Rhodobacter sphaeroides), this protein is Protein nucleotidyltransferase YdiU.